Consider the following 388-residue polypeptide: Chorismate synthase (388 aa).

2 residues coordinate NADP(+): arginine 39 and arginine 45. Residues 130 to 132, 251 to 252, glycine 296, 311 to 315, and arginine 337 each bind FMN; these read RSS, NA, and KPIPT.

It belongs to the chorismate synthase family. As to quaternary structure, homotetramer. FMNH2 serves as cofactor.

The enzyme catalyses 5-O-(1-carboxyvinyl)-3-phosphoshikimate = chorismate + phosphate. Its pathway is metabolic intermediate biosynthesis; chorismate biosynthesis; chorismate from D-erythrose 4-phosphate and phosphoenolpyruvate: step 7/7. Its function is as follows. Catalyzes the anti-1,4-elimination of the C-3 phosphate and the C-6 proR hydrogen from 5-enolpyruvylshikimate-3-phosphate (EPSP) to yield chorismate, which is the branch point compound that serves as the starting substrate for the three terminal pathways of aromatic amino acid biosynthesis. This reaction introduces a second double bond into the aromatic ring system. The sequence is that of Chorismate synthase from Streptococcus thermophilus (strain CNRZ 1066).